A 243-amino-acid chain; its full sequence is Uridylate kinase (243 aa).

12 to 15 contributes to the ATP binding site; that stretch reads KLSG. Residues 20-25 are involved in allosteric activation by GTP; that stretch reads GPGGSG. Residue glycine 56 coordinates UMP. Positions 57 and 61 each coordinate ATP. UMP contacts are provided by residues aspartate 76 and 137–144; that span reads TGSPYFST. Residues asparagine 165, tyrosine 171, and aspartate 174 each coordinate ATP.

This sequence belongs to the UMP kinase family. As to quaternary structure, homohexamer.

The protein resides in the cytoplasm. The enzyme catalyses UMP + ATP = UDP + ADP. It functions in the pathway pyrimidine metabolism; CTP biosynthesis via de novo pathway; UDP from UMP (UMPK route): step 1/1. Its activity is regulated as follows. Allosterically activated by GTP. Inhibited by UTP. Its function is as follows. Catalyzes the reversible phosphorylation of UMP to UDP. The sequence is that of Uridylate kinase from Oenococcus oeni (strain ATCC BAA-331 / PSU-1).